Here is a 484-residue protein sequence, read N- to C-terminus: Glycogen synthase (484 aa).

Position 15 (Lys-15) interacts with ADP-alpha-D-glucose.

It belongs to the glycosyltransferase 1 family. Bacterial/plant glycogen synthase subfamily.

It catalyses the reaction [(1-&gt;4)-alpha-D-glucosyl](n) + ADP-alpha-D-glucose = [(1-&gt;4)-alpha-D-glucosyl](n+1) + ADP + H(+). It functions in the pathway glycan biosynthesis; glycogen biosynthesis. Its function is as follows. Synthesizes alpha-1,4-glucan chains using ADP-glucose. The sequence is that of Glycogen synthase from Bacillus licheniformis (strain ATCC 14580 / DSM 13 / JCM 2505 / CCUG 7422 / NBRC 12200 / NCIMB 9375 / NCTC 10341 / NRRL NRS-1264 / Gibson 46).